A 1604-amino-acid chain; its full sequence is Putative surface cell antigen sca2 (1604 aa).

A signal peptide spans 1 to 33; it reads MSLQNSHSKKYVLTFFMSTCLLTSSFLSTSARA. Disordered stretches follow at residues 324-354, 554-603, and 1183-1240; these read TTKP…RTKP, NVNN…SNPN, and QQEN…KSLL. Residues 554 to 564 show a composition bias toward low complexity; it reads NVNNNSNKGQN. The segment covering 568–587 has biased composition (pro residues); the sequence is ILPPTPPLNGSMPPSPPPPL. Composition is skewed to basic and acidic residues over residues 1193-1213 and 1227-1240; these read SSTK…KSDS and SKND…KSLL. Residues 1325–1604 enclose the Autotransporter domain; that stretch reads EASINRGVWI…QGLIKLKVNL (280 aa).

The protein localises to the cell outer membrane. The polypeptide is Putative surface cell antigen sca2 (sca2) (Rickettsia felis (strain ATCC VR-1525 / URRWXCal2) (Rickettsia azadi)).